The chain runs to 360 residues: 3-dehydroquinate synthase (360 aa).

NAD(+)-binding positions include 71-76 (DGEQYK), 105-109 (GVVGD), 129-130 (TT), Lys142, Lys151, and 169-172 (TLNT). Glu184, His248, and His265 together coordinate Zn(2+).

The protein belongs to the sugar phosphate cyclases superfamily. Dehydroquinate synthase family. It depends on Co(2+) as a cofactor. The cofactor is Zn(2+). NAD(+) is required as a cofactor.

The protein resides in the cytoplasm. The enzyme catalyses 7-phospho-2-dehydro-3-deoxy-D-arabino-heptonate = 3-dehydroquinate + phosphate. It participates in metabolic intermediate biosynthesis; chorismate biosynthesis; chorismate from D-erythrose 4-phosphate and phosphoenolpyruvate: step 2/7. Catalyzes the conversion of 3-deoxy-D-arabino-heptulosonate 7-phosphate (DAHP) to dehydroquinate (DHQ). The sequence is that of 3-dehydroquinate synthase from Coxiella burnetii (strain RSA 331 / Henzerling II).